The chain runs to 288 residues: Probable ketoamine kinase VV1_2562 (288 aa).

Residue 92–94 participates in ATP binding; it reads NFL. D195 serves as the catalytic Proton acceptor.

This sequence belongs to the fructosamine kinase family.

Ketoamine kinase that phosphorylates ketoamines on the third carbon of the sugar moiety to generate ketoamine 3-phosphate. The protein is Probable ketoamine kinase VV1_2562 of Vibrio vulnificus (strain CMCP6).